The primary structure comprises 391 residues: Protein ABCI12, chloroplastic (391 aa).

A chloroplast-targeting transit peptide spans 1–63 (MNHSNLANPT…LAAKRVFIVR (63 aa)). Helical transmembrane passes span 134-154 (ANLV…ILVL), 168-188 (LLSG…PPML), 229-249 (VGST…ICLA), 263-283 (FLFP…TLLL), and 370-390 (FASV…EYFL).

It localises to the plastid. The protein resides in the chloroplast. It is found in the membrane. This Arabidopsis thaliana (Mouse-ear cress) protein is Protein ABCI12, chloroplastic (ABCI12).